We begin with the raw amino-acid sequence, 172 residues long: Putative phosphoesterase BAMEG_3349 (172 aa).

H34 acts as the Proton donor in catalysis. Short sequence motifs (HXTX) lie at residues 34 to 37 (HITL) and 115 to 118 (HLTI). H115 functions as the Proton acceptor in the catalytic mechanism.

This sequence belongs to the 2H phosphoesterase superfamily. YjcG family.

The protein is Putative phosphoesterase BAMEG_3349 of Bacillus anthracis (strain CDC 684 / NRRL 3495).